Reading from the N-terminus, the 158-residue chain is NAD(P)H-quinone oxidoreductase subunit O, chloroplastic (158 aa).

Residues 1 to 38 (MAFSATVSQLSSLSTISSSLPISSRRLPHRSLPQFTVK) constitute a chloroplast transit peptide. Residues 33–70 (PQFTVKAEAEKEKQSTQGKSDGEASPAATKTPKTLPKK) form a disordered region. Positions 56 to 70 (ASPAATKTPKTLPKK) are enriched in low complexity.

It belongs to the NDH complex subunit O family. In terms of assembly, part of the chloroplast NDH complex, composed of a mixture of chloroplast and nucleus encoded subunits. Component of the NDH subcomplex A, at least composed of ndhH, ndhI, ndhJ, ndhK, ndhL, ndhM, ndhN and ndhO.

Its subcellular location is the plastid. The protein localises to the chloroplast thylakoid membrane. It catalyses the reaction a plastoquinone + NADH + (n+1) H(+)(in) = a plastoquinol + NAD(+) + n H(+)(out). It carries out the reaction a plastoquinone + NADPH + (n+1) H(+)(in) = a plastoquinol + NADP(+) + n H(+)(out). In terms of biological role, NDH shuttles electrons from NAD(P)H:plastoquinone, via FMN and iron-sulfur (Fe-S) centers, to quinones in the photosynthetic chain and possibly in a chloroplast respiratory chain. The immediate electron acceptor for the enzyme in this species is believed to be plastoquinone. Couples the redox reaction to proton translocation, and thus conserves the redox energy in a proton gradient. The protein is NAD(P)H-quinone oxidoreductase subunit O, chloroplastic of Arabidopsis thaliana (Mouse-ear cress).